Reading from the N-terminus, the 100-residue chain is uncharacterized protein (100 aa).

The stretch at 65–96 (PELSKNWEKLKKEIEQKHKEIQELISEFDNMF) forms a coiled coil.

This is an uncharacterized protein from Acidianus filamentous virus 2 (isolate Italy/Pozzuoli) (AFV-2).